The sequence spans 375 residues: Probable pectin lyase C (375 aa).

An N-terminal signal peptide occupies residues 1-20 (MKITSTIPAVLLGLAPLSAA). Disulfide bonds link C83-C100 and C92-C220. R250 is an active-site residue. C317 and C325 are oxidised to a cystine.

The protein belongs to the polysaccharide lyase 1 family.

Its subcellular location is the secreted. The enzyme catalyses Eliminative cleavage of (1-&gt;4)-alpha-D-galacturonan methyl ester to give oligosaccharides with 4-deoxy-6-O-methyl-alpha-D-galact-4-enuronosyl groups at their non-reducing ends.. Functionally, pectinolytic enzymes consist of four classes of enzymes: pectin lyase, polygalacturonase, pectin methylesterase and rhamnogalacturonase. Among pectinolytic enzymes, pectin lyase is the most important in depolymerization of pectin, since it cleaves internal glycosidic bonds of highly methylated pectins. The protein is Probable pectin lyase C (pelC) of Aspergillus oryzae (strain ATCC 42149 / RIB 40) (Yellow koji mold).